Reading from the N-terminus, the 890-residue chain is MANNIIPNVSSGDLVGSTPTFPPNAVVRGDFLYLRDVDGNQIPGRTVSDGDEITVLFISNEKNIVLVQYPTSSGYRQGYVTNATSIIKYKDDYSWVNGSTPEPVYDFDKTTQIGTLDPRERAVVLYKVDGMTYVAYDTGKGKLTKSGLVHYEGSGSSTGGGSFNGVAPGEVVPGGFTYENNAEVVGDELYLRDANGNLIPGRSVSVGDKITVLDVGYTKQLALVQYPAGDVVRQGYVTNATNLIRYFNQYSWHNGSTSEEVLDENGGHLGSLNPYEAATLLYEKNGMKHVVYDTNKGPNTKSGYVKYEGAAATRVDIPYPSITNAQKIVYGISGRGRELAAYKVGNGSNSLVFVCAIHGWEDNWAADGIELTRIGNGLIEHFQNAGTNNWSLYIIPVANPDGLSEGFTNNGPGRCTIVGAVDCNRDFPLGFSPGGVPRYHSGSEPLSVSESKSLHDFIQGVKNRTSGEMCVIDLHGWEGAAIGNPEIGEYFRNQFGFGQRSGYGDNRGFMIGWAKSIGAKAALIELPGSTKSHSDVVNGRYLQKIINAVTNLIGGSGGSSSGGSSFSDVSYEATGEVINVQSFLNVREGAGLYTNSIGQLRQGNKVNIVAKNGDWYKIKYGSEYGYVNSGYIIILKNNTSVKLEDWQEDCIKFGWGPITKEKYLEYMDSTRLYKSIENDISQAIKNKSLINVINPLNFSVSEMIACTQIVFNNETTSFFRDEWYSKSNPNFIVKYKKLSNGQIIVLDRINIKKPEKLKTKIPKAAKGAFKDTIKFEFFKGIDGWFTAISGAISIGSDLSVFQSNGELKSNEDIAKALAAAVIVNGVETMFCAFLGGFIAQCIAPEFPIVAAVAGAIVSAIAAFAIGYFVDNHEKEKYLMNSFKGLIDYLF.

2 SH3b domains span residues 22 to 84 and 179 to 241; these read PPNA…TNAT and ENNA…TNAT. The Peptidase M14 domain occupies 303–549; the sequence is GYVKYEGAAA…RYLQKIINAV (247 aa). Positions 358, 361, and 475 each coordinate Zn(2+). The active-site Proton donor/acceptor is E525. One can recognise an SH3b 3 domain in the interval 572-636; the sequence is EATGEVINVQ…VNSGYIIILK (65 aa). The segment at 815–869 is hydrophobic; sequence KALAAAVIVNGVETMFCAFLGGFIAQCIAPEFPIVAAVAGAIVSAIAAFAIGYFV.

Zn(2+) is required as a cofactor.

Functionally, may function as an ionophore. The sequence is that of Bacteriocin BCN5 (bcn) from Clostridium perfringens.